The chain runs to 473 residues: BPI fold-containing family B member 3 (473 aa).

The first 20 residues, 1–20, serve as a signal peptide directing secretion; it reads MMPGVYALLLLWGLATPCLG. A glycan (N-linked (GlcNAc...) asparagine) is linked at Asn-139. A disulfide bridge connects residues Cys-161 and Cys-196.

The protein belongs to the BPI/LBP/Plunc superfamily. BPI/LBP family. In terms of tissue distribution, highly expressed in olfactory mucosa but undetectable in thymus, kidney, lung, brain, spleen and liver.

Its subcellular location is the secreted. Functionally, may have the capacity to recognize and bind specific classes of odorants. May act as a carrier molecule, transporting odorants across the mucus layer to access receptor sites. May serve as a primary defense mechanism by recognizing and removing potentially harmful odorants or pathogenic microorganisms from the mucosa or clearing excess odorant from mucus to enable new odorant stimuli to be received. The polypeptide is BPI fold-containing family B member 3 (Rattus norvegicus (Rat)).